The chain runs to 475 residues: tRNA-2-methylthio-N(6)-dimethylallyladenosine synthase (475 aa).

Residues 3-120 (KKLHIKTWGC…LPEMIDQIKD (118 aa)) enclose the MTTase N-terminal domain. Cysteine 12, cysteine 49, cysteine 83, cysteine 157, cysteine 161, and cysteine 164 together coordinate [4Fe-4S] cluster. The 233-residue stretch at 143–375 (RAEGPSAFVS…QDRITQQAMR (233 aa)) folds into the Radical SAM core domain. The TRAM domain maps to 378–441 (RQMVGTVQRI…TNSLRGVFIR (64 aa)).

The protein belongs to the methylthiotransferase family. MiaB subfamily. As to quaternary structure, monomer. The cofactor is [4Fe-4S] cluster.

Its subcellular location is the cytoplasm. It catalyses the reaction N(6)-dimethylallyladenosine(37) in tRNA + (sulfur carrier)-SH + AH2 + 2 S-adenosyl-L-methionine = 2-methylsulfanyl-N(6)-dimethylallyladenosine(37) in tRNA + (sulfur carrier)-H + 5'-deoxyadenosine + L-methionine + A + S-adenosyl-L-homocysteine + 2 H(+). Catalyzes the methylthiolation of N6-(dimethylallyl)adenosine (i(6)A), leading to the formation of 2-methylthio-N6-(dimethylallyl)adenosine (ms(2)i(6)A) at position 37 in tRNAs that read codons beginning with uridine. The protein is tRNA-2-methylthio-N(6)-dimethylallyladenosine synthase of Shewanella pealeana (strain ATCC 700345 / ANG-SQ1).